Reading from the N-terminus, the 298-residue chain is 4-hydroxy-tetrahydrodipicolinate synthase (298 aa).

A pyruvate-binding site is contributed by threonine 51. The Proton donor/acceptor role is filled by tyrosine 140. Lysine 168 functions as the Schiff-base intermediate with substrate in the catalytic mechanism. Isoleucine 210 lines the pyruvate pocket.

This sequence belongs to the DapA family. Homotetramer; dimer of dimers.

The protein resides in the cytoplasm. The catalysed reaction is L-aspartate 4-semialdehyde + pyruvate = (2S,4S)-4-hydroxy-2,3,4,5-tetrahydrodipicolinate + H2O + H(+). It functions in the pathway amino-acid biosynthesis; L-lysine biosynthesis via DAP pathway; (S)-tetrahydrodipicolinate from L-aspartate: step 3/4. In terms of biological role, catalyzes the condensation of (S)-aspartate-beta-semialdehyde [(S)-ASA] and pyruvate to 4-hydroxy-tetrahydrodipicolinate (HTPA). This Acidovorax sp. (strain JS42) protein is 4-hydroxy-tetrahydrodipicolinate synthase.